The primary structure comprises 437 residues: Phenylacetate-coenzyme A ligase (437 aa).

This sequence belongs to the phenylacetyl-CoA ligase family. As to quaternary structure, monomer.

It catalyses the reaction 2-phenylacetate + ATP + CoA = phenylacetyl-CoA + AMP + diphosphate. It functions in the pathway aromatic compound metabolism; phenylacetate degradation. In terms of biological role, catalyzes the activation of phenylacetic acid (PA) to phenylacetyl-CoA (PA-CoA). The polypeptide is Phenylacetate-coenzyme A ligase (paaK) (Escherichia coli (strain K12)).